The sequence spans 380 residues: Cytochrome b (380 aa).

The next 4 membrane-spanning stretches (helical) occupy residues 34 to 54, 78 to 99, 114 to 134, and 179 to 199; these read FGSLLGICLTTQILTGLLLAM, WLIRNLHANGASFFFICIYLHI, WNTGIILLLTLMATAFVGYVL, and FFALHFLLPFMIAGLTLIHLT. 2 residues coordinate heme b: H84 and H98. Residues H183 and H197 each coordinate heme b. H202 is a binding site for a ubiquinone. 4 helical membrane-spanning segments follow: residues 227–247, 289–309, 321–341, and 348–368; these read TKDTLGFALMLLPLTTLALFS, LGGVLALAASVLILFLIPLLH, LSQLLFWTLVANLTILTWIGS, and FIIIGQLASLTYFTILLILFP.

It belongs to the cytochrome b family. In terms of assembly, the cytochrome bc1 complex contains 11 subunits: 3 respiratory subunits (MT-CYB, CYC1 and UQCRFS1), 2 core proteins (UQCRC1 and UQCRC2) and 6 low-molecular weight proteins (UQCRH/QCR6, UQCRB/QCR7, UQCRQ/QCR8, UQCR10/QCR9, UQCR11/QCR10 and a cleavage product of UQCRFS1). This cytochrome bc1 complex then forms a dimer. The cofactor is heme b.

It localises to the mitochondrion inner membrane. Its function is as follows. Component of the ubiquinol-cytochrome c reductase complex (complex III or cytochrome b-c1 complex) that is part of the mitochondrial respiratory chain. The b-c1 complex mediates electron transfer from ubiquinol to cytochrome c. Contributes to the generation of a proton gradient across the mitochondrial membrane that is then used for ATP synthesis. This Aptenodytes patagonicus (King penguin) protein is Cytochrome b (MT-CYB).